We begin with the raw amino-acid sequence, 454 residues long: SH2 domain-containing protein 4A (454 aa).

4 disordered regions span residues 45 to 65 (AMER…NGKS), 107 to 131 (EQEA…KSQY), 152 to 177 (KEEL…SSSS), and 237 to 302 (RKSK…AYPQ). Basic and acidic residues predominate over residues 107–120 (EQEAEEPRKTHSEE). 2 positions are modified to phosphoserine: Ser-118 and Ser-124. Residues 240–259 (KAADEKRRSLAKQAREDYKR) are compositionally biased toward basic and acidic residues. A phosphoserine mark is found at Ser-261 and Ser-315. In terms of domain architecture, SH2 spans 347–440 (WFHGILTLKK…LGKELLLYPC (94 aa)).

In terms of assembly, interacts with ESR1. As to expression, ubiquitously expressed. Aberrantly expressed in some cancers.

It localises to the cytoplasm. Its function is as follows. Inhibits estrogen-induced cell proliferation by competing with PLCG for binding to ESR1, blocking the effect of estrogen on PLCG and repressing estrogen-induced proliferation. May play a role in T-cell development and function. In Homo sapiens (Human), this protein is SH2 domain-containing protein 4A (SH2D4A).